We begin with the raw amino-acid sequence, 426 residues long: Enolase (426 aa).

Gln163 is a binding site for (2R)-2-phosphoglycerate. Residue Glu205 is the Proton donor of the active site. Residues Asp242, Glu286, and Asp313 each contribute to the Mg(2+) site. Residues Lys338, Arg367, Ser368, and Lys389 each coordinate (2R)-2-phosphoglycerate. Residue Lys338 is the Proton acceptor of the active site.

The protein belongs to the enolase family. It depends on Mg(2+) as a cofactor.

The protein localises to the cytoplasm. Its subcellular location is the secreted. It is found in the cell surface. It carries out the reaction (2R)-2-phosphoglycerate = phosphoenolpyruvate + H2O. Its pathway is carbohydrate degradation; glycolysis; pyruvate from D-glyceraldehyde 3-phosphate: step 4/5. In terms of biological role, catalyzes the reversible conversion of 2-phosphoglycerate (2-PG) into phosphoenolpyruvate (PEP). It is essential for the degradation of carbohydrates via glycolysis. This is Enolase from Gemmatimonas aurantiaca (strain DSM 14586 / JCM 11422 / NBRC 100505 / T-27).